The chain runs to 291 residues: N-acetylmannosamine kinase (291 aa).

Residues 5-12 (AIDIGGTK) and 132-139 (GVGGGVVC) contribute to the ATP site. The Zn(2+) site is built by H156, C166, C168, and C173.

It belongs to the ROK (NagC/XylR) family. NanK subfamily. Homodimer.

It carries out the reaction an N-acyl-D-mannosamine + ATP = an N-acyl-D-mannosamine 6-phosphate + ADP + H(+). It participates in amino-sugar metabolism; N-acetylneuraminate degradation; D-fructose 6-phosphate from N-acetylneuraminate: step 2/5. Functionally, catalyzes the phosphorylation of N-acetylmannosamine (ManNAc) to ManNAc-6-P. In Salmonella paratyphi B (strain ATCC BAA-1250 / SPB7), this protein is N-acetylmannosamine kinase.